The following is a 75-amino-acid chain: Protein P8 (75 aa).

Positions 19 to 47 (PMGGMPSIASSSSAETGQQTQSGNFTGGG) are disordered. Polar residues predominate over residues 26–39 (IASSSSAETGQQTQ). A helical membrane pass occupies residues 55–72 (NNQLLIVGAVVIGLFLVI).

It localises to the virion membrane. The protein is Protein P8 (VIII) of Pseudoalteromonas phage PM2 (Bacteriophage PM2).